A 360-amino-acid polypeptide reads, in one-letter code: Ferredoxin--NADP reductase, leaf isozyme 1, chloroplastic (360 aa).

Residues 1-49 constitute a chloroplast transit peptide; the sequence is MAAAISAAVSLPSSKSSSLLTKISSVSPQRIFLKKSTVCYRRVVSVKAQ. The FAD-binding FR-type domain occupies 81–203; it reads KNPYTGRCLL…TGPVGKEMLM (123 aa). FAD-binding positions include 139-142, 160-162, Tyr166, and 177-179; these read RLYS, CVK, and VCS. Positions 142 and 162 each coordinate NADP(+). A disulfide bridge connects residues Cys178 and Cys183. Phosphoserine is present on Ser179. Thr210 bears the Phosphothreonine mark. Thr218 is an FAD binding site. NADP(+) is bound by residues Thr218, 250-251, 280-281, Lys290, 319-320, and Glu358; these read VP, SR, and GL.

It belongs to the ferredoxin--NADP reductase type 1 family. In terms of assembly, heterodimer with LFNR2. Interacts with PGRL1A and PGRL1B. Interacts with TIC62. Component of high molecular weight thylakoid LFNRs-containing protein complexes containing LIR1, LFNR1, LFNR2, TIC62 and TROL proteins. Interacts directly with LIR1 and TIC62; LIR1 increases the affinity of LFNR1 and LFNR2 for TIC62. Binds to YCF54 in chloroplasts. The cofactor is FAD. In terms of processing, may form interchain disulfide bonds with LIR1. As to expression, expressed in shoots. Restricted to green tissues, being more abundant in siliques.

It is found in the plastid. The protein resides in the chloroplast stroma. Its subcellular location is the chloroplast thylakoid membrane. The enzyme catalyses 2 reduced [2Fe-2S]-[ferredoxin] + NADP(+) + H(+) = 2 oxidized [2Fe-2S]-[ferredoxin] + NADPH. Its pathway is energy metabolism; photosynthesis. Functionally, plays a key role in regulating the relative amounts of cyclic and non-cyclic electron flow to meet the demands of the plant for ATP and reducing power. Probable electron donor required for the MgProto monomethylester (MgProtoME) cyclase complex reaction to form protochlorophyllide, thus connecting chlorophyll synthesis with photosynthetic activity. The chain is Ferredoxin--NADP reductase, leaf isozyme 1, chloroplastic from Arabidopsis thaliana (Mouse-ear cress).